The chain runs to 130 residues: Protein ApaG (130 aa).

Residues 3-127 enclose the ApaG domain; the sequence is KAETRGISVT…FSLDVPHVRR (125 aa).

This Methylobacterium sp. (strain 4-46) protein is Protein ApaG.